Consider the following 240-residue polypeptide: 1-acyl-sn-glycerol-3-phosphate acyltransferase (240 aa).

An HXXXXD motif motif is present at residues 73 to 78 (HQNNYD).

It belongs to the 1-acyl-sn-glycerol-3-phosphate acyltransferase family.

The protein resides in the cell inner membrane. It carries out the reaction a 1-acyl-sn-glycero-3-phosphate + an acyl-CoA = a 1,2-diacyl-sn-glycero-3-phosphate + CoA. The protein operates within phospholipid metabolism; CDP-diacylglycerol biosynthesis; CDP-diacylglycerol from sn-glycerol 3-phosphate: step 2/3. Converts lysophosphatidic acid (LPA) into phosphatidic acid by incorporating acyl moiety at the 2 position. The polypeptide is 1-acyl-sn-glycerol-3-phosphate acyltransferase (plsC) (Haemophilus influenzae (strain ATCC 51907 / DSM 11121 / KW20 / Rd)).